The following is a 278-amino-acid chain: Small ribosomal subunit protein uS3 (278 aa).

One can recognise a KH type-2 domain in the interval Leu39 to Ser107. The tract at residues Ala244–Glu278 is disordered. The span at Lys251–Glu278 shows a compositional bias: basic and acidic residues.

Belongs to the universal ribosomal protein uS3 family. Part of the 30S ribosomal subunit. Forms a tight complex with proteins S10 and S14.

Binds the lower part of the 30S subunit head. Binds mRNA in the 70S ribosome, positioning it for translation. The chain is Small ribosomal subunit protein uS3 from Dehalococcoides mccartyi (strain ATCC BAA-2266 / KCTC 15142 / 195) (Dehalococcoides ethenogenes (strain 195)).